The sequence spans 542 residues: Chaperonin GroEL 1 (542 aa).

ATP-binding positions include 29 to 32, 86 to 90, glycine 413, 477 to 479, and aspartate 493; these read TLGP, DGTTT, and NAA.

Belongs to the chaperonin (HSP60) family. In terms of assembly, forms a cylinder of 14 subunits composed of two heptameric rings stacked back-to-back. Interacts with the co-chaperonin GroES.

Its subcellular location is the cytoplasm. It carries out the reaction ATP + H2O + a folded polypeptide = ADP + phosphate + an unfolded polypeptide.. Together with its co-chaperonin GroES, plays an essential role in assisting protein folding. The GroEL-GroES system forms a nano-cage that allows encapsulation of the non-native substrate proteins and provides a physical environment optimized to promote and accelerate protein folding. This is Chaperonin GroEL 1 from Renibacterium salmoninarum (strain ATCC 33209 / DSM 20767 / JCM 11484 / NBRC 15589 / NCIMB 2235).